The primary structure comprises 1441 residues: Remodeling and spacing factor 1 (1441 aa).

The 68-residue stretch at 17-84 (PGSCPNFAVV…MRKIGKSVTA (68 aa)) folds into the DDT domain. Glycyl lysine isopeptide (Lys-Gly) (interchain with G-Cter in SUMO2) cross-links involve residues lysine 136 and lysine 215. A compositionally biased stretch (polar residues) spans 215–227 (KNSSQQDNSSRES). A disordered region spans residues 215 to 283 (KNSSQQDNSS…TTVKKEKEDE (69 aa)). Serine 227 carries the post-translational modification Phosphoserine. 2 stretches are compositionally biased toward basic and acidic residues: residues 234 to 257 (ETKK…KSEE) and 274 to 283 (TTVKKEKEDE). Residues lysine 236, lysine 243, lysine 248, lysine 252, and lysine 254 each participate in a glycyl lysine isopeptide (Lys-Gly) (interchain with G-Cter in SUMO2) cross-link. Lysine 277 participates in a covalent cross-link: Glycyl lysine isopeptide (Lys-Gly) (interchain with G-Cter in SUMO1); alternate. Lysine 277 is covalently cross-linked (Glycyl lysine isopeptide (Lys-Gly) (interchain with G-Cter in SUMO2); alternate). Residues lysine 284, lysine 288, lysine 294, lysine 305, lysine 306, lysine 309, lysine 323, lysine 327, lysine 337, lysine 342, lysine 358, lysine 373, lysine 381, and lysine 390 each participate in a glycyl lysine isopeptide (Lys-Gly) (interchain with G-Cter in SUMO2) cross-link. The span at 330–340 (RADPKDTKSSM) shows a compositional bias: basic and acidic residues. Residues 330–385 (RADPKDTKSSMEKPVAQEPERIEFGGNIKSSHEITEKSTEETEKLKNDQQAKIPLK) form a disordered region. Basic and acidic residues predominate over residues 359–378 (SSHEITEKSTEETEKLKNDQ). Serine 392 and serine 397 each carry phosphoserine. Residues lysine 400, lysine 405, lysine 415, and lysine 419 each participate in a glycyl lysine isopeptide (Lys-Gly) (interchain with G-Cter in SUMO2) cross-link. Serine 429 bears the Phosphoserine mark. A Glycyl lysine isopeptide (Lys-Gly) (interchain with G-Cter in SUMO2) cross-link involves residue lysine 439. Lysine 456 is covalently cross-linked (Glycyl lysine isopeptide (Lys-Gly) (interchain with G-Cter in SUMO1); alternate). Residue lysine 456 forms a Glycyl lysine isopeptide (Lys-Gly) (interchain with G-Cter in SUMO2); alternate linkage. Glycyl lysine isopeptide (Lys-Gly) (interchain with G-Cter in SUMO2) cross-links involve residues lysine 463 and lysine 468. Positions 467–480 (TKEESYSPSKDRNI) are enriched in basic and acidic residues. The disordered stretch occupies residues 467–634 (TKEESYSPSK…AAETSPPSNI (168 aa)). Phosphoserine is present on serine 473. Over residues 482–498 (TEGNGTESLNSVITSMK) the composition is skewed to polar residues. Lysine 498 participates in a covalent cross-link: Glycyl lysine isopeptide (Lys-Gly) (interchain with G-Cter in SUMO2). Residues 500 to 514 (GELEKETAPLRKDAD) are compositionally biased toward basic and acidic residues. Residue serine 524 is modified to Phosphoserine. Polar residues predominate over residues 552–562 (SKTALSSTESC). Lysine 565 is covalently cross-linked (Glycyl lysine isopeptide (Lys-Gly) (interchain with G-Cter in SUMO2)). Residues 565–601 (KGEEKSPKTKKDKRPPILECLEKLEKSKKTFLDKDAQ) are compositionally biased toward basic and acidic residues. 2 positions are modified to phosphoserine: serine 570 and serine 604. A compositionally biased stretch (basic and acidic residues) spans 609–621 (EVPKSTLESEKPG). A Phosphoserine modification is found at serine 622. Residue threonine 628 is modified to Phosphothreonine. At serine 629 the chain carries Phosphoserine. Residues lysine 662, lysine 663, lysine 670, lysine 677, lysine 698, and lysine 709 each participate in a glycyl lysine isopeptide (Lys-Gly) (interchain with G-Cter in SUMO2) cross-link. The interval 675-887 (FTKVEMDNLD…EEKESEEAIL (213 aa)) is disordered. Serine 748 is subject to Phosphoserine. 3 stretches are compositionally biased toward basic and acidic residues: residues 753-770 (LEPE…EKTN), 789-802 (AEIR…KRGE), and 816-831 (KTDK…KDTN). Glycyl lysine isopeptide (Lys-Gly) (interchain with G-Cter in SUMO2) cross-links involve residues lysine 758, lysine 768, lysine 795, and lysine 799. Residues 864–873 (GSGSEKSSAA) show a composition bias toward low complexity. The segment covering 874 to 887 (SEEEEEKESEEAIL) has biased composition (acidic residues). Serine 882 is modified (phosphoserine). A PHD-type zinc finger spans residues 891-941 (DEPCKKCGLPNHPELILLCDSCDSGYHTACLRPPLMIIPDGEWFCPPCQHK). Positions 942–1012 (LLCEKLEEQL…SKANLLERRS (71 aa)) form a coiled coil. The interval 983–1007 (PPQEPDFSEDQEEKKKDSKKSKANL) is disordered. Lysine 1039 participates in a covalent cross-link: Glycyl lysine isopeptide (Lys-Gly) (interchain with G-Cter in SUMO2). Lysine 1050 is modified (N6-acetyllysine). The segment at 1063-1428 (ISTILDEERK…EEEEDELLRV (366 aa)) is disordered. Acidic residues-rich tracts occupy residues 1094-1107 (LDSD…ESED) and 1120-1141 (VVSD…DSDT). Phosphoserine is present on residues serine 1096, serine 1098, and serine 1105. Residues 1146–1169 (RRLRRHPSRPMRQSRRLRRKTPKK) show a composition bias toward basic residues. Residues 1189-1199 (SDFSDDFSDDF) show a composition bias toward acidic residues. Basic residues predominate over residues 1203–1212 (RRRRSRRNQK). Phosphoserine occurs at positions 1221, 1223, and 1226. Basic residues predominate over residues 1229–1244 (SLRRGKEIRRVHKRRL). Serine 1258 and serine 1277 each carry phosphoserine. Threonine 1278 bears the Phosphothreonine mark. Over residues 1280-1292 (EYSEADEEEEEEE) the composition is skewed to acidic residues. Residue threonine 1305 is modified to Phosphothreonine. Phosphoserine occurs at positions 1325 and 1336. Basic and acidic residues predominate over residues 1335–1344 (ESTKKPYRIE). Lysine 1339 bears the N6-acetyllysine mark. Residues serine 1345, serine 1359, and serine 1375 each carry the phosphoserine modification. Positions 1394 to 1408 (PKDNSTASASLASNG) are enriched in polar residues.

As to quaternary structure, component of the RSF-1 ISWI chromatin-remodeling complex at least composed of SMARCA1 and RSF1. Within the RSF-1 ISWI chromatin-remodeling complex interacts with SMARCA1. Component of the RSF-5 ISWI chromatin-remodeling complex (also called the RSF complex) at least composed of SMARCA5/SNF2H and RSF1. Within the RSF-5 ISWI chromatin-remodeling complex interacts with SMARCA5/SNF2H; the interaction is direct. Identified in a centromere complex containing histones H2A, H2B and H4, and at least CENPA, CENPB, CENPC, CENPT, CENPN, HJURP, SUPT16H, SSRP1 and RSF1. Also binds the HBV pX/HBx protein, which is required to activate transcription of the viral genome. Phosphorylated. In terms of tissue distribution, ubiquitously expressed. Highly expressed in the heart, skeletal muscle, kidney and placenta. Expressed at low levels in the brain and colon.

It localises to the nucleus. Its function is as follows. Regulatory subunit of the ATP-dependent RSF-1 and RSF-5 ISWI chromatin-remodeling complexes, which form ordered nucleosome arrays on chromatin and facilitate access to DNA during DNA-templated processes such as DNA replication, transcription, and repair. Binds to core histones together with SMARCA5, and is required for the assembly of regular nucleosome arrays by the RSF-5 ISWI chromatin-remodeling complex. Directly stimulates the ATPase activity of SMARCA1 and SMARCA5 in the RSF-1 and RSF-5 ISWI chromatin-remodeling complexes, respectively. The RSF-1 ISWI chromatin remodeling complex has a lower ATP hydrolysis rate than the RSF-5 ISWI chromatin-remodeling complex. The complexes do not have the ability to slide mononucleosomes to the center of a DNA template. Facilitates transcription of hepatitis B virus (HBV) genes by the pX transcription activator. In case of infection by HBV, together with pX, it represses TNF-alpha induced NF-kappa-B transcription activation. Represses transcription when artificially recruited to chromatin by fusion to a heterogeneous DNA binding domain. In Homo sapiens (Human), this protein is Remodeling and spacing factor 1 (RSF1).